A 515-amino-acid polypeptide reads, in one-letter code: ATP synthase subunit alpha (515 aa).

ATP is bound at residue 171–178; it reads GDRQTGKT.

This sequence belongs to the ATPase alpha/beta chains family. In terms of assembly, F-type ATPases have 2 components, CF(1) - the catalytic core - and CF(0) - the membrane proton channel. CF(1) has five subunits: alpha(3), beta(3), gamma(1), delta(1), epsilon(1). CF(0) has three main subunits: a(1), b(2) and c(9-12). The alpha and beta chains form an alternating ring which encloses part of the gamma chain. CF(1) is attached to CF(0) by a central stalk formed by the gamma and epsilon chains, while a peripheral stalk is formed by the delta and b chains.

Its subcellular location is the cell inner membrane. The catalysed reaction is ATP + H2O + 4 H(+)(in) = ADP + phosphate + 5 H(+)(out). Produces ATP from ADP in the presence of a proton gradient across the membrane. The alpha chain is a regulatory subunit. In Xylella fastidiosa (strain M12), this protein is ATP synthase subunit alpha.